The following is a 140-amino-acid chain: Large ribosomal subunit protein uL11 (140 aa).

Belongs to the universal ribosomal protein uL11 family. Part of the ribosomal stalk of the 50S ribosomal subunit. Interacts with L10 and the large rRNA to form the base of the stalk. L10 forms an elongated spine to which L12 dimers bind in a sequential fashion forming a multimeric L10(L12)X complex. One or more lysine residues are methylated.

Functionally, forms part of the ribosomal stalk which helps the ribosome interact with GTP-bound translation factors. This Geobacter sp. (strain M21) protein is Large ribosomal subunit protein uL11.